Reading from the N-terminus, the 145-residue chain is Putative sterol 14-demethylase-like protein (145 aa).

A helical membrane pass occupies residues 5 to 25 (YYTLLKTSVAIIIVFVVAKLI).

This sequence belongs to the cytochrome P450 family. In terms of tissue distribution, expressed specifically in roots.

The protein localises to the membrane. The polypeptide is Putative sterol 14-demethylase-like protein (CYP51G2) (Arabidopsis thaliana (Mouse-ear cress)).